The sequence spans 454 residues: Bifunctional protein GlmU (454 aa).

Residues 1 to 226 form a pyrophosphorylase region; sequence MSLEIVILAA…AMEVQGVNDR (226 aa). UDP-N-acetyl-alpha-D-glucosamine is bound by residues 8-11, Lys22, Gln73, 78-79, 99-101, Gly136, Glu151, Asn166, and Asn224; these read LAAG, GT, and YGD. Asp101 is a Mg(2+) binding site. Asn224 serves as a coordination point for Mg(2+). Positions 227-247 are linker; sequence MQQAQLERHYQRLRAEELMRQ. Residues 248 to 454 are N-acetyltransferase; it reads GVTLLDPQRL…NWKRPEKIKK (207 aa). UDP-N-acetyl-alpha-D-glucosamine contacts are provided by Arg330 and Lys348. His360 functions as the Proton acceptor in the catalytic mechanism. UDP-N-acetyl-alpha-D-glucosamine contacts are provided by Tyr363 and Asn374. Acetyl-CoA contacts are provided by residues Ala377, 383-384, Ser402, Ala420, and Arg437; that span reads NY.

The protein in the N-terminal section; belongs to the N-acetylglucosamine-1-phosphate uridyltransferase family. This sequence in the C-terminal section; belongs to the transferase hexapeptide repeat family. In terms of assembly, homotrimer. Requires Mg(2+) as cofactor.

The protein localises to the cytoplasm. It catalyses the reaction alpha-D-glucosamine 1-phosphate + acetyl-CoA = N-acetyl-alpha-D-glucosamine 1-phosphate + CoA + H(+). The catalysed reaction is N-acetyl-alpha-D-glucosamine 1-phosphate + UTP + H(+) = UDP-N-acetyl-alpha-D-glucosamine + diphosphate. The protein operates within nucleotide-sugar biosynthesis; UDP-N-acetyl-alpha-D-glucosamine biosynthesis; N-acetyl-alpha-D-glucosamine 1-phosphate from alpha-D-glucosamine 6-phosphate (route II): step 2/2. It functions in the pathway nucleotide-sugar biosynthesis; UDP-N-acetyl-alpha-D-glucosamine biosynthesis; UDP-N-acetyl-alpha-D-glucosamine from N-acetyl-alpha-D-glucosamine 1-phosphate: step 1/1. It participates in bacterial outer membrane biogenesis; LPS lipid A biosynthesis. Its function is as follows. Catalyzes the last two sequential reactions in the de novo biosynthetic pathway for UDP-N-acetylglucosamine (UDP-GlcNAc). The C-terminal domain catalyzes the transfer of acetyl group from acetyl coenzyme A to glucosamine-1-phosphate (GlcN-1-P) to produce N-acetylglucosamine-1-phosphate (GlcNAc-1-P), which is converted into UDP-GlcNAc by the transfer of uridine 5-monophosphate (from uridine 5-triphosphate), a reaction catalyzed by the N-terminal domain. The protein is Bifunctional protein GlmU of Pseudomonas aeruginosa (strain ATCC 15692 / DSM 22644 / CIP 104116 / JCM 14847 / LMG 12228 / 1C / PRS 101 / PAO1).